The primary structure comprises 76 residues: Small ribosomal subunit protein bS18 (76 aa).

The protein belongs to the bacterial ribosomal protein bS18 family. Part of the 30S ribosomal subunit. Forms a tight heterodimer with protein bS6.

Binds as a heterodimer with protein bS6 to the central domain of the 16S rRNA, where it helps stabilize the platform of the 30S subunit. This chain is Small ribosomal subunit protein bS18, found in Pseudomonas aeruginosa (strain LESB58).